The chain runs to 132 residues: MIEKNNSNVSPPRRDLQEVRAIAKRVRMSPHKVRKVIDQIRGRSYEEALMLLEFMPYRACYPILQTVCSAAANANHNLGLSKANLIISKVMVDQGPVLKRFRPRAQGRGYPIRKPSCTITVFVKNHPSQNEN.

Belongs to the universal ribosomal protein uL22 family. As to quaternary structure, part of the 50S ribosomal subunit.

Its subcellular location is the plastid. It is found in the chloroplast. In terms of biological role, this protein binds specifically to 23S rRNA. Its function is as follows. The globular domain of the protein is located near the polypeptide exit tunnel on the outside of the subunit, while an extended beta-hairpin is found that lines the wall of the exit tunnel in the center of the 70S ribosome. This chain is Large ribosomal subunit protein uL22c (rpl22), found in Staurastrum punctulatum (Green alga).